The following is a 378-amino-acid chain: Mas-related G-protein coupled receptor MRG (378 aa).

Residues 1 to 77 lie on the Extracellular side of the membrane; sequence MVWGKICWFS…VGQQALPLNI (77 aa). Residues Asn54 and Asn57 are each glycosylated (N-linked (GlcNAc...) asparagine). A helical transmembrane segment spans residues 78–101; that stretch reads IAPKAVLVSLCGVLLNGTVFWLLC. At 102–109 the chain is on the cytoplasmic side; sequence CGATNPYM. The helical transmembrane segment at 110 to 136 threads the bilayer; it reads VYILHLVAADVIYLCCSAVGFLQVTLL. Residues 137-154 lie on the Extracellular side of the membrane; sequence TYHGVVFFIPDFLAILSP. Residues 155–169 traverse the membrane as a helical segment; the sequence is FSFEVCLCLLVAIST. Topologically, residues 170–191 are cytoplasmic; it reads ERCVCVLFPIWYRCHRPKYTSN. Residues 192–207 form a helical membrane-spanning segment; that stretch reads VVCTLIWGLPFCINIV. The Extracellular segment spans residues 208–221; sequence KSLFLTYWKHVKAC. A helical transmembrane segment spans residues 222 to 248; it reads VIFLKLSGLFHAILSLVMCVSSLTLLI. The Cytoplasmic portion of the chain corresponds to 249-264; sequence RFLCCSQQQKATRVYA. Residues 265–286 traverse the membrane as a helical segment; sequence VVQISAPMFLLWALPLSVAPLI. At 287 to 297 the chain is on the extracellular side; the sequence is TDFKMFVTTSY. The helical transmembrane segment at 298-317 threads the bilayer; the sequence is LISLFLIINSSANPIIYFFV. Residues 318-378 lie on the Cytoplasmic side of the membrane; that stretch reads GSLRKKRLKE…PREHRVDVET (61 aa). The segment at 344–378 is disordered; sequence GRNKKAAGIDPMEQPHSTQHVENLLPREHRVDVET. The span at 368-378 shows a compositional bias: basic and acidic residues; sequence LPREHRVDVET.

This sequence belongs to the G-protein coupled receptor 1 family. Mas subfamily.

It is found in the cell membrane. The chain is Mas-related G-protein coupled receptor MRG (MAS1L) from Homo sapiens (Human).